The primary structure comprises 216 residues: uncharacterized protein (216 aa).

Residues 1-216 (MVVKIVEAYE…DVTFLKLKLK (216 aa)) form the N-acetyltransferase domain.

This sequence belongs to the acetyltransferase family.

This is an uncharacterized protein from Dictyostelium discoideum (Social amoeba).